A 525-amino-acid polypeptide reads, in one-letter code: Zinc finger protein 678 (525 aa).

14 consecutive C2H2-type zinc fingers follow at residues 97–119 (FQCIECGRNFSWRSILTEHKRIH), 125–147 (YKCEECGKVFNRCSNLTKHKRIH), 153–175 (YKCDECGKVFNWWSQLTNHKKIH), 181–203 (YKCDECDKVFNWWSQLTSHKKIH), 209–231 (YPCEECGKAFTQFSNLTQHKRIH), 237–259 (YKCKECCKAFNKFSNLTQHKRIH), 265–287 (YKCEECGNVFNECSHLTRHRRIH), 293–315 (YKCEECGKAFTQFASLTRHKRIH), 321–343 (YQCEECGKTFNRCSHLSSHKRIH), 349–371 (YKCEECGRTFTQFSNLTQHKRIH), 377–399 (YKCKECGKAFNKFSSLTQHRRIH), 405–427 (YKCEECGKVFKQCSHLTSHKRIH), 433–455 (YKCKECGKAFYQSSILSKHKRIH), and 461–483 (YKCEECGKAFNQFSSLTRHKRIH). The C2H2-type 15; degenerate zinc finger occupies 489–511 (YKCKECGKGFYQSSIHSKYKRIY).

This sequence belongs to the krueppel C2H2-type zinc-finger protein family.

The protein resides in the nucleus. Its function is as follows. May be involved in transcriptional regulation. The polypeptide is Zinc finger protein 678 (ZNF678) (Homo sapiens (Human)).